A 697-amino-acid chain; its full sequence is MQRETISVPVGAQEIIFETGKIARQAGGAVVVRCGETVVFTTACAAPNADSTTDFLPLRVDYQEKFSSAGKTLGGFIKREGRPTEKEVLVSRLIDRPIRPMFEEGYYNEVQLLSFVWSYDGINSPEPLAICGASAALVISDIPLIKPVGAVRIGFIDAQFIVNPTIEQQKQSKLDLLIAGTEEAVLMIEGFCDFLTEDQVLEAIEIGHRSIKTICQTLEQWRAKVGKPKNRETLRQLPKELYADVESIANPLLEKALRICEKQKREEALAEVTKAVNDRLMPENEEPKYPAKHIAYVIKDVSSKMMRQMILNENVRSDGRTSTDIRFIDIEQSLLPRAHGSSLFTRGETQALAVCTLGGASMAQRFEDLEGEGNNRFYLQYSFPPYSVGEVGRVGAPGRREIGHGKLAERALMAVIPTKEQFPYTIRLESNITESNGSSSMATVCGGCLALMDAGVAIKRPVAGIAMGLILENERFIILSDILGIEDALGDMDFKVTGDQNGITAFQMDIKVEGITIEIMRVALKQAKEGRVHILNKMLAVCPTYKGEMSRYAPRIETIQIKPSKIAVVIGPGGKQIRAIIEQTGVQIDIDDTGLVNIAAIDLVSIEKAKAIIHGLTAEIEIGRIYSGKAISIAPFGVFVEILPGKEGLCHISEFDVNRINSLDEFVKQGDMLMVKVLDINERGQIKLSRKATLQSQ.

2 residues coordinate Mg(2+): D487 and D493. In terms of domain architecture, KH spans 554 to 613; the sequence is PRIETIQIKPSKIAVVIGPGGKQIRAIIEQTGVQIDIDDTGLVNIAAIDLVSIEKAKAII. The 69-residue stretch at 623–691 folds into the S1 motif domain; it reads GRIYSGKAIS…ERGQIKLSRK (69 aa).

The protein belongs to the polyribonucleotide nucleotidyltransferase family. It depends on Mg(2+) as a cofactor.

The protein resides in the cytoplasm. The enzyme catalyses RNA(n+1) + phosphate = RNA(n) + a ribonucleoside 5'-diphosphate. Involved in mRNA degradation. Catalyzes the phosphorolysis of single-stranded polyribonucleotides processively in the 3'- to 5'-direction. The sequence is that of Polyribonucleotide nucleotidyltransferase from Protochlamydia amoebophila (strain UWE25).